A 398-amino-acid polypeptide reads, in one-letter code: Immunoglobulin heavy constant gamma 2A (398 aa).

3 consecutive Ig-like domains span residues 5–97 (PSVY…KKIE), 120–219 (PSVF…RTIS), and 228–324 (PQVY…KSFS). Cystine bridges form between cysteine 26/cysteine 81, cysteine 143/cysteine 203, and cysteine 249/cysteine 307. An N-linked (GlcNAc...) asparagine glycan is attached at asparagine 179. The chain crosses the membrane as a helical span at residues 345–362 (GLWTTITIFISLFLLSVC). The Cytoplasmic segment spans residues 363 to 398 (YSASVTLFKVKWIFSSVVELKQTISPDYRNMIGQGA).

The protein localises to the cell membrane. This is Immunoglobulin heavy constant gamma 2A from Mus musculus (Mouse).